A 332-amino-acid polypeptide reads, in one-letter code: Probable electron transfer flavoprotein subunit alpha, mitochondrial (332 aa).

275–303 contributes to the FAD binding site; that stretch reads LYIAIGISGAIQHLAGMKDSKVIVAINKD.

Belongs to the ETF alpha-subunit/FixB family. In terms of assembly, heterodimer of an alpha and a beta subunit. FAD serves as cofactor.

It is found in the mitochondrion matrix. Its function is as follows. The electron transfer flavoprotein serves as a specific electron acceptor for several dehydrogenases, including five acyl-CoA dehydrogenases, glutaryl-CoA and sarcosine dehydrogenase. It transfers the electrons to the main mitochondrial respiratory chain via ETF-ubiquinone oxidoreductase (ETF dehydrogenase). In Caenorhabditis elegans, this protein is Probable electron transfer flavoprotein subunit alpha, mitochondrial.